Consider the following 404-residue polypeptide: F-box protein At3g57590 (404 aa).

An F-box domain is found at 1–47 (MEPIPNDLILEIFSRLPAKSVIGFRTLSKHWASILRSPVFTELFLTR).

This Arabidopsis thaliana (Mouse-ear cress) protein is F-box protein At3g57590.